Here is a 61-residue protein sequence, read N- to C-terminus: Small ribosomal subunit protein uS14 (61 aa).

The Zn(2+) site is built by Cys-24, Cys-27, Cys-40, and Cys-43.

The protein belongs to the universal ribosomal protein uS14 family. Zinc-binding uS14 subfamily. As to quaternary structure, part of the 30S ribosomal subunit. Contacts proteins S3 and S10. Requires Zn(2+) as cofactor.

Binds 16S rRNA, required for the assembly of 30S particles and may also be responsible for determining the conformation of the 16S rRNA at the A site. This Dehalococcoides mccartyi (strain ATCC BAA-2266 / KCTC 15142 / 195) (Dehalococcoides ethenogenes (strain 195)) protein is Small ribosomal subunit protein uS14.